Consider the following 56-residue polypeptide: Endoglucanase Cel5A (56 aa).

The active-site Nucleophile is the Glu-45.

It belongs to the glycosyl hydrolase 5 (cellulase A) family.

Its subcellular location is the secreted. It localises to the extracellular space. The catalysed reaction is Endohydrolysis of (1-&gt;4)-beta-D-glucosidic linkages in cellulose, lichenin and cereal beta-D-glucans.. Functionally, has avicelase and carboxymethylcellulase activity. This chain is Endoglucanase Cel5A, found in Gloeophyllum trabeum (Brown rot fungus).